Consider the following 350-residue polypeptide: Eukaryotic translation initiation factor 3 subunit I (350 aa).

WD repeat units lie at residues Gly8 to Glu49, His51 to Thr89, Asn91 to Thr135, Gln149 to Gln190, Glu198 to Lys240, and Gly296 to Leu335.

This sequence belongs to the eIF-3 subunit I family. Component of the eukaryotic translation initiation factor 3 (eIF-3) complex.

The protein resides in the cytoplasm. Functionally, component of the eukaryotic translation initiation factor 3 (eIF-3) complex, which is involved in protein synthesis of a specialized repertoire of mRNAs and, together with other initiation factors, stimulates binding of mRNA and methionyl-tRNAi to the 40S ribosome. The eIF-3 complex specifically targets and initiates translation of a subset of mRNAs involved in cell proliferation. The polypeptide is Eukaryotic translation initiation factor 3 subunit I (Lodderomyces elongisporus (strain ATCC 11503 / CBS 2605 / JCM 1781 / NBRC 1676 / NRRL YB-4239) (Yeast)).